We begin with the raw amino-acid sequence, 364 residues long: Deoxyribonuclease-2-alpha (364 aa).

An N-terminal signal peptide occupies residues 1–21 (MATLSPLLLAALLWVPVGTLT). Cys22 and Cys161 are oxidised to a cystine. Asn72, Asn88, Asn171, Asn214, Asn268, and Asn292 each carry an N-linked (GlcNAc...) asparagine glycan. 2 disulfide bridges follow: Cys269–Cys349 and Cys310–Cys329. Residue His297 is part of the active site.

It belongs to the DNase II family.

It is found in the lysosome. It carries out the reaction Endonucleolytic cleavage to nucleoside 3'-phosphates and 3'-phosphooligonucleotide end-products.. In terms of biological role, hydrolyzes DNA under acidic conditions with a preference for double-stranded DNA. Plays a major role in the clearance of nucleic acids generated through apoptosis, hence preventing autoinflammation. Necessary for proper fetal development and for definitive erythropoiesis in fetal liver and bone marrow, where it degrades nuclear DNA expelled from erythroid precursor cells. The polypeptide is Deoxyribonuclease-2-alpha (DNASE2) (Sus scrofa (Pig)).